A 144-amino-acid chain; its full sequence is Actin-associated protein FAM107A (144 aa).

Residues 67–94 are a coiled coil; sequence LQRVLEHRRRNQLIKKKKEELEAKRLQC. Residues 74-84 carry the Nuclear localization signal motif; sequence RRRNQLIKKKK. Residues 105–124 are disordered; sequence QRLNQLEKPPEKEEDHAPEF. Residues 112–124 show a composition bias toward basic and acidic residues; that stretch reads KPPEKEEDHAPEF.

The protein belongs to the FAM107 family. As to quaternary structure, interacts with ACTB. Interacts with COMMD1; this interaction stabilizes COMMD1 in the nucleus. Interacts with MAP1A. Interacts with PRDX1. Interacts with F-actin.

The protein localises to the nucleus. It localises to the cytoplasm. Its subcellular location is the cytoskeleton. The protein resides in the stress fiber. It is found in the cell junction. The protein localises to the focal adhesion. It localises to the cell projection. Its subcellular location is the ruffle membrane. The protein resides in the synapse. In terms of biological role, stress-inducible actin-binding protein that plays a role in synaptic and cognitive functions by modulating actin filamentous (F-actin) dynamics. Mediates polymerization of globular actin to F-actin. Also binds to, stabilizes and bundles F-actin. Involved in synaptic function by regulating neurite outgrowth in an actin-dependent manner and for the acquisition of hippocampus-dependent cognitive function, such as learning and long-term memory. Plays a role in the actin and microtubule cytoskeleton organization; negatively regulates focal adhesion (FA) assembly promoting malignant glial cell migration in an actin-, microtubule- and MAP1A-dependent manner. Also involved in neuroblastoma G1/S phase cell cycle progression and cell proliferation inhibition by stimulating ubiquitination of NF-kappa-B subunit RELA and NF-kappa-B degradation in a COMMD1- and actin-dependent manner. May play a role in tumor development. The protein is Actin-associated protein FAM107A (FAM107A) of Pan troglodytes (Chimpanzee).